A 57-amino-acid chain; its full sequence is Large ribosomal subunit protein bL32c (57 aa).

This sequence belongs to the bacterial ribosomal protein bL32 family.

It localises to the plastid. The protein resides in the chloroplast. This chain is Large ribosomal subunit protein bL32c, found in Nandina domestica (Heavenly bamboo).